The sequence spans 219 residues: Elongation factor Ts (219 aa).

The involved in Mg(2+) ion dislocation from EF-Tu stretch occupies residues 82 to 85; it reads TDFV.

The protein belongs to the EF-Ts family.

Its subcellular location is the cytoplasm. Functionally, associates with the EF-Tu.GDP complex and induces the exchange of GDP to GTP. It remains bound to the aminoacyl-tRNA.EF-Tu.GTP complex up to the GTP hydrolysis stage on the ribosome. The protein is Elongation factor Ts of Anaeromyxobacter dehalogenans (strain 2CP-C).